Reading from the N-terminus, the 238-residue chain is Histone H1 (238 aa).

2 stretches are compositionally biased toward low complexity: residues 21–34 and 123–132; these read AAVD…AKAP and AKAPAAVKPK. 2 disordered regions span residues 21–57 and 123–238; these read AAVD…AHPS and AKAP…KAKK. In terms of domain architecture, H15 spans 54 to 124; that stretch reads AHPSYAEMVS…KVKGSYKLAK (71 aa). Residues 133 to 197 are compositionally biased toward basic residues; it reads TATKKKPAAK…AAKPKAKAAA (65 aa). Low complexity-rich tracts occupy residues 198–208 and 217–230; these read KKAPAAATPKK and KRAT…PAKK.

Belongs to the histone H1/H5 family.

The protein resides in the nucleus. Its subcellular location is the chromosome. Histones H1 are necessary for the condensation of nucleosome chains into higher-order structures. This chain is Histone H1, found in Triticum aestivum (Wheat).